The following is a 318-amino-acid chain: Molybdenum cofactor insertion chaperone PaoD (318 aa).

As to quaternary structure, homodimer in solution. Interacts with MocA.

Its function is as follows. Chaperone required for the production of an active PaoABC aldehyde oxidoreductase. Stabilizes the PaoC subunit and is required for the insertion of the molybdenum cofactor into this subunit. Binds molybdenum cofactor. Binds the molybdopterin cytosine dinucleotide (MCD) form of the cofactor after its formation by the molybdenum cofactor cytidylyltransferase MocA. This Escherichia coli (strain K12) protein is Molybdenum cofactor insertion chaperone PaoD.